Here is a 258-residue protein sequence, read N- to C-terminus: Cell division protein FtsQ (258 aa).

The Cytoplasmic portion of the chain corresponds to methionine 1–threonine 29. Residues alanine 30–leucine 50 traverse the membrane as a helical segment. At proline 51 to serine 258 the chain is on the periplasmic side. In terms of domain architecture, POTRA spans tyrosine 57–arginine 127.

The protein belongs to the FtsQ/DivIB family. FtsQ subfamily. Part of a complex composed of FtsB, FtsL and FtsQ.

Its subcellular location is the cell inner membrane. In terms of biological role, essential cell division protein. May link together the upstream cell division proteins, which are predominantly cytoplasmic, with the downstream cell division proteins, which are predominantly periplasmic. May control correct divisome assembly. In Alcanivorax borkumensis (strain ATCC 700651 / DSM 11573 / NCIMB 13689 / SK2), this protein is Cell division protein FtsQ.